The primary structure comprises 232 residues: RNA chaperone ProQ (232 aa).

Residues 105–182 (EAKARVQAQR…REEQHTPVSD (78 aa)) are disordered. Residues 117-136 (QQAKKREAAATAGEKEDAPR) are compositionally biased toward basic and acidic residues. Basic residues predominate over residues 137–146 (RERKPRPTTP). A compositionally biased stretch (basic and acidic residues) spans 147–177 (RRKEGAERKPRAQKPVEKAPKTVKAPREEQH).

It belongs to the ProQ family.

It localises to the cytoplasm. In terms of biological role, RNA chaperone with significant RNA binding, RNA strand exchange and RNA duplexing activities. May regulate ProP activity through an RNA-based, post-transcriptional mechanism. The protein is RNA chaperone ProQ of Escherichia coli (strain K12).